A 259-amino-acid chain; its full sequence is MNKPVLVSFLVSGDPNPDATLKFMKALDKYSGVIELGIPFSDPVADGPTIQAADVRALSNGFKIAKSFEVLKEFRKESDTPVILMTYYNPVFKRGIETFVMQAKEAGANGLIIVDLPLQEATEYREICKKHEMGTVFLAAPNTPEERLKISDEASTEFLYLISTFGITGARESFEQMTFDFIKRARTTCKGKICVGFGISKGSHAESLIEQGADGVIVGSAFVDIIKNYGDSEEALVKLEELAKELSEGIEKGYEKRNK.

Catalysis depends on proton acceptor residues Glu35 and Asp46.

Belongs to the TrpA family. Tetramer of two alpha and two beta chains.

It catalyses the reaction (1S,2R)-1-C-(indol-3-yl)glycerol 3-phosphate + L-serine = D-glyceraldehyde 3-phosphate + L-tryptophan + H2O. It functions in the pathway amino-acid biosynthesis; L-tryptophan biosynthesis; L-tryptophan from chorismate: step 5/5. Functionally, the alpha subunit is responsible for the aldol cleavage of indoleglycerol phosphate to indole and glyceraldehyde 3-phosphate. The polypeptide is Tryptophan synthase alpha chain (Methanococcus maripaludis (strain C7 / ATCC BAA-1331)).